Here is a 198-residue protein sequence, read N- to C-terminus: Alpha-S1-casein (198 aa).

The first 15 residues, 1–15, serve as a signal peptide directing secretion; it reads MKLLILTCLVASAVA. Disordered regions lie at residues 28–47 and 71–97; these read QTQR…LKEE and SEST…EQKH. Residues serine 39, serine 80, serine 81, serine 83, serine 84, and serine 85 each carry the phosphoserine modification.

The protein belongs to the alpha-casein family. Mammary gland specific. Secreted in milk.

It localises to the secreted. In terms of biological role, important role in the capacity of milk to transport calcium phosphate. This chain is Alpha-S1-casein (CSN1S1), found in Cavia porcellus (Guinea pig).